The primary structure comprises 845 residues: MDIRKEYLDFFKSKGHEIITSAPLVPDDATLLFTNAGMVPFKSIFTGDVPRPNPPIRTSCQTCIRAGGKHNDLDNVGYTARHHTFFEMLGNFSFGEYFKKDAISYAWEFVTEVLKLPKDKLYVTVHEKDDEAYELWQKFIQKDRIYRFGDKDNFWAMGDTGPCGPCSEIFYDQGSEHFNSDEDYMGGDGDRFLEIWNLVFMQFERSKDGTMTPLPKPSIDTGMGLERVTAIKEDKFSNYDSSLFMPLINEVAKLCHKQYEYKTGASYRVISDHIRSVTFLLAQGVNFDKEGRGYVLRRILRRAVRHGYLLGIKEPFMYKLVDKVVELMGEHYSYLKEKKEYVKELIKLEEERFLATIVAGLDLFNEELAKTSSNVFSGEVAFKLYDTYGFPLDLTADMLREKGLSVDEAKFDALMNEQKARAKASWKGSGDAAKESGDFKTLLEEFGENKFIGYDNLKSSSKVLALLNSEFKRVNELKNGEIGYVMLDSTPFYAQSGGQCGDTGMLGENQALDTKKYFGLNLSMIEAKNSIKIGDIVLCEVSLNRLEIRRHHSATHLLQAALRNVLGAHIAQAGSSVEADKLRFDFSHPKPVTKEELEKIENFVNEAILKGAPAKIEIMDIQNAKKSGAIALFGEKYADKVRVLTLGPSKELCGGTHVENLNEIGSFFIVRESGVSAGVRRIEAVCSKAALELSKEFRKEINDIKDSLKGADPLLSIKKLKDEIKSLQNDLKNASNTKDLDVKDINGVKVVVSKFDGDIKSKIDELKNKFDKVVVFLAGVKDGKVSLGSGSKNTSIKAGELVKTVAPIVGGGGGGRDDFATAGGKDESKIDEALNAATKFISEKL.

Positions 552, 556, 653, and 657 each coordinate Zn(2+).

The protein belongs to the class-II aminoacyl-tRNA synthetase family. Requires Zn(2+) as cofactor.

The protein localises to the cytoplasm. The catalysed reaction is tRNA(Ala) + L-alanine + ATP = L-alanyl-tRNA(Ala) + AMP + diphosphate. In terms of biological role, catalyzes the attachment of alanine to tRNA(Ala) in a two-step reaction: alanine is first activated by ATP to form Ala-AMP and then transferred to the acceptor end of tRNA(Ala). Also edits incorrectly charged Ser-tRNA(Ala) and Gly-tRNA(Ala) via its editing domain. The chain is Alanine--tRNA ligase from Campylobacter fetus subsp. fetus (strain 82-40).